The primary structure comprises 327 residues: Fructose-1,6-bisphosphatase class 1 (327 aa).

4 residues coordinate Mg(2+): E84, D103, L105, and D106. Substrate contacts are provided by residues 106–109, N197, and K263; that span reads DGSS. E269 provides a ligand contact to Mg(2+).

The protein belongs to the FBPase class 1 family. Homotetramer. Mg(2+) serves as cofactor.

Its subcellular location is the cytoplasm. It catalyses the reaction beta-D-fructose 1,6-bisphosphate + H2O = beta-D-fructose 6-phosphate + phosphate. Its pathway is carbohydrate biosynthesis; gluconeogenesis. The polypeptide is Fructose-1,6-bisphosphatase class 1 (Idiomarina loihiensis (strain ATCC BAA-735 / DSM 15497 / L2-TR)).